A 154-amino-acid chain; its full sequence is Proteinase inhibitor type-2 P303.51 (154 aa).

Residues Met1–Ala25 form the signal peptide. 2 tandem repeats follow at residues Ala31–Lys87 and Pro88–Lys147. 8 disulfide bridges follow: Cys34–Cys122, Cys38–Cys118, Cys46–Cys128, Cys58–Cys95, Cys61–Cys79, Cys62–Cys91, Cys68–Cys104, and Cys121–Cys139.

This sequence belongs to the protease inhibitor I20 (potato type II proteinase inhibitor) family.

This Solanum tuberosum (Potato) protein is Proteinase inhibitor type-2 P303.51.